The chain runs to 331 residues: MRAPEFWHKDGFAARLLEPVGLVYAALTRHRVARPPGVRLGIPVVCVGNLTAGGAGKTPVALAVMDALRRRGVVGHFLSRGYGGKMEGPVAVDPVGHGPEDVGDEPLLLANSAPCWVSRNRASGGLVAEGAGAQAVVMDDGHQNPSLAKDLSLVVVDGGYGFGNGRYIPAGPLRESIEAGLARAGAVILIGSDSENLAARIPPHLKAGVPLLTARLEPGPEAARLVGRKVVAFAGIGRPEKFFATLTALGARVVARHPFADHYPYAEADIQPILDEAYGLGAVPVTTSKDAVRLPPDQRPQVDVVGVRVVFDEPLAFEALIDRLILGRLPS.

51-58 (TAGGAGKT) provides a ligand contact to ATP.

This sequence belongs to the LpxK family.

The enzyme catalyses a lipid A disaccharide + ATP = a lipid IVA + ADP + H(+). Its pathway is glycolipid biosynthesis; lipid IV(A) biosynthesis; lipid IV(A) from (3R)-3-hydroxytetradecanoyl-[acyl-carrier-protein] and UDP-N-acetyl-alpha-D-glucosamine: step 6/6. Its function is as follows. Transfers the gamma-phosphate of ATP to the 4'-position of a tetraacyldisaccharide 1-phosphate intermediate (termed DS-1-P) to form tetraacyldisaccharide 1,4'-bis-phosphate (lipid IVA). This is Tetraacyldisaccharide 4'-kinase from Rhodospirillum rubrum (strain ATCC 11170 / ATH 1.1.1 / DSM 467 / LMG 4362 / NCIMB 8255 / S1).